A 252-amino-acid chain; its full sequence is MSDIDDEEFEQLAVSALEEVEKKAGFAQQPTPQKVSRVTAHSILVNPRQKGNPLLPHVRNVPWEYTDIVPDFVMGTGICSLFLSLKYHHLHPEYIYSRISKLGKSYNLRILLILVDVENHQASIQELVKTSIVNQYTLILAWSSEEAARYLETYKAYENMSPALIMEKPSTDYLSQVQSFLTSIRGINKSDSLSLLSKFGSLERALVASRDELEQLEGWGPTKVNRFLEAVQQPFMSHSTIKRPEAINLKQT.

The DNA-binding element occupies 76-98 (TGICSLFLSLKYHHLHPEYIYSR).

The protein belongs to the ERCC1/RAD10/SWI10 family. In terms of assembly, heterodimer composed of rad16 and swi10.

The protein resides in the nucleus. Functionally, involved in termination of copy-synthesis during mating-type switching. Involved in nucleotide excision repair of DNA damaged with UV light, bulky adducts, or cross-linking agents. Along with RAD16 forms an endonuclease that specifically degrades single-stranded DNA. The protein is Mating-type switching protein swi10 (swi10) of Schizosaccharomyces pombe (strain 972 / ATCC 24843) (Fission yeast).